The sequence spans 333 residues: N-acetyl-gamma-glutamyl-phosphate reductase (333 aa).

Cys-145 is a catalytic residue.

This sequence belongs to the NAGSA dehydrogenase family. Type 1 subfamily.

The protein resides in the cytoplasm. The enzyme catalyses N-acetyl-L-glutamate 5-semialdehyde + phosphate + NADP(+) = N-acetyl-L-glutamyl 5-phosphate + NADPH + H(+). It functions in the pathway amino-acid biosynthesis; L-arginine biosynthesis; N(2)-acetyl-L-ornithine from L-glutamate: step 3/4. Functionally, catalyzes the NADPH-dependent reduction of N-acetyl-5-glutamyl phosphate to yield N-acetyl-L-glutamate 5-semialdehyde. The polypeptide is N-acetyl-gamma-glutamyl-phosphate reductase (Salinispora tropica (strain ATCC BAA-916 / DSM 44818 / JCM 13857 / NBRC 105044 / CNB-440)).